The primary structure comprises 135 residues: MQYGAAAEQAWYMPAAAPAPMVESAVARVERLASESAVVVFSVSSCCMCHAVKRLFCGMGVHPTVHELDLDPRGRELERALARLVGYGGPAAASPPVVPVVFIGGKLVGAMDRVMAAHINGSLVPLLKEAGALWL.

Residues 26-134 enclose the Glutaredoxin domain; that stretch reads VARVERLASE…PLLKEAGALW (109 aa). The cysteines at positions 46 and 49 are disulfide-linked. A Responsive for interaction with TGA factors motif is present at residues 132-135; that stretch reads ALWL.

The protein belongs to the glutaredoxin family. CC-type subfamily.

The protein resides in the cytoplasm. It localises to the nucleus. Has a glutathione-disulfide oxidoreductase activity in the presence of NADPH and glutathione reductase. Reduces low molecular weight disulfides and proteins. This is Glutaredoxin-C3 (GRXC3) from Oryza sativa subsp. japonica (Rice).